A 154-amino-acid polypeptide reads, in one-letter code: Endoribonuclease YbeY (154 aa).

Zn(2+) is bound by residues H114, H118, and H124.

Belongs to the endoribonuclease YbeY family. The cofactor is Zn(2+).

Its subcellular location is the cytoplasm. Its function is as follows. Single strand-specific metallo-endoribonuclease involved in late-stage 70S ribosome quality control and in maturation of the 3' terminus of the 16S rRNA. The protein is Endoribonuclease YbeY of Histophilus somni (strain 129Pt) (Haemophilus somnus).